The primary structure comprises 372 residues: MAGVRLVDVWKVFGEVTAVREMSLEVKDGEFMILLGPSGCGKTTTLRMIAGLEEPSRGQIYIGDKLVADPEKGIFVPPKDRDIAMVFQSYALYPHMTVYDNIAFPLKLRKVPRQEIDQRVREVAELLGLTELLNRKPRELSGGQRQRVALGRAIVRKPQVFLMDEPLSNLDAKLRVRMRAELKKLQRQLGVTTIYVTHDQVEAMTMGDRIAVMNRGVLQQVGSPDEVYDKPANTFVAGFIGSPPMNFLDAIVTEDGFVDFGEFRLKLLPDQFEVLGELGYVGREVIFGIRPEDLYDAMFAQVRVPGENLVRAVVEIVENLGSERIVHLRVGGVTFVGSFRSESRVREGVEVDVVFDMKKIHIFDKTTGKAIF.

The ABC transporter domain maps to 4-240 (VRLVDVWKVF…PANTFVAGFI (237 aa)). 36 to 43 (GPSGCGKT) contacts ATP.

It belongs to the ABC transporter superfamily. Maltose/trehalose importer (TC 3.A.1.1.7) family. Homodimer. The complex is composed of two ATP-binding proteins (MalK), two transmembrane proteins (MalG and MalF) and a solute-binding protein (MalE).

The protein localises to the cell membrane. It catalyses the reaction D-maltose(out) + ATP + H2O = D-maltose(in) + ADP + phosphate + H(+). With respect to regulation, inhibited by N-ethylmaleimide but not by vanadate. In terms of biological role, part of the ABC transporter complex MalEFGK involved in trehalose/maltose import. Responsible for energy coupling to the transport system. This is Trehalose/maltose import ATP-binding protein MalK (malK) from Thermococcus litoralis (strain ATCC 51850 / DSM 5473 / JCM 8560 / NS-C).